The sequence spans 340 residues: Chitinase 7 (340 aa).

The N-terminal stretch at 1 to 32 (MIAARAANLQVAMKALALAVLALAYAAATARA) is a signal peptide. One can recognise a Chitin-binding type-1 domain in the interval 33–73 (EQCGRQAGGARCPNRLCCSRWGWCGLTDDYCKGGCQSQCRV). Disulfide bonds link Cys35-Cys50, Cys44-Cys56, Cys49-Cys63, Cys67-Cys71, Cys118-Cys173, Cys185-Cys193, and Cys293-Cys323.

It belongs to the glycosyl hydrolase 19 family. Chitinase class I subfamily. As to expression, expressed in pistils, stamens and lodicules.

The catalysed reaction is Random endo-hydrolysis of N-acetyl-beta-D-glucosaminide (1-&gt;4)-beta-linkages in chitin and chitodextrins.. Hydrolyzes chitin and may play a role in defense against fungal pathogens containing chitin. The sequence is that of Chitinase 7 (Cht7) from Oryza sativa subsp. japonica (Rice).